The following is a 327-amino-acid chain: Interleukin-12 subunit beta (327 aa).

A signal peptide spans 1-22 (MHPQQLVVSWFSLVLLTSPIVA). An Ig-like C2-type domain is found at 23–106 (IWELEKNVYV…LSRSLLLLHK (84 aa)). Cys-50 and Cys-90 are disulfide-bonded. The N-linked (GlcNAc...) asparagine glycan is linked to Asn-223. The Fibronectin type-III domain occupies 238–327 (PPKNLQLRPL…WSEWASVSCS (90 aa)).

It belongs to the IL-12B family. In terms of assembly, heterodimer with IL12A; disulfide-linked. The heterodimer is known as interleukin IL-12. Heterodimer with IL23A; disulfide-linked. The heterodimer is known as interleukin IL-23. Also secreted as a monomer. Interacts with NBR1; this interaction promotes IL-12 secretion.

Its subcellular location is the secreted. In terms of biological role, cytokine that can act as a growth factor for activated T and NK cells, enhance the lytic activity of NK/lymphokine-activated killer cells, and stimulate the production of IFN-gamma by resting PBMC. Functionally, associates with IL23A to form the IL-23 interleukin, a heterodimeric cytokine which functions in innate and adaptive immunity. IL-23 may constitute with IL-17 an acute response to infection in peripheral tissues. IL-23 binds to a heterodimeric receptor complex composed of IL12RB1 and IL23R, activates the Jak-Stat signaling cascade, stimulates memory rather than naive T-cells and promotes production of pro-inflammatory cytokines. IL-23 induces autoimmune inflammation and thus may be responsible for autoimmune inflammatory diseases and may be important for tumorigenesis. The sequence is that of Interleukin-12 subunit beta (IL12B) from Cervus elaphus (Red deer).